The following is a 161-amino-acid chain: Phosphopantetheine adenylyltransferase (161 aa).

S11 contributes to the substrate binding site. ATP-binding positions include 11 to 12 and H19; that span reads SF. Substrate contacts are provided by K43, L75, and R89. ATP-binding positions include 90 to 92, E100, and 125 to 131; these read GLR and YSYLSSS.

It belongs to the bacterial CoaD family. In terms of assembly, homohexamer. Mg(2+) serves as cofactor.

The protein localises to the cytoplasm. It carries out the reaction (R)-4'-phosphopantetheine + ATP + H(+) = 3'-dephospho-CoA + diphosphate. The protein operates within cofactor biosynthesis; coenzyme A biosynthesis; CoA from (R)-pantothenate: step 4/5. Reversibly transfers an adenylyl group from ATP to 4'-phosphopantetheine, yielding dephospho-CoA (dPCoA) and pyrophosphate. The polypeptide is Phosphopantetheine adenylyltransferase (Geobacter sp. (strain M21)).